The sequence spans 134 residues: Putative pre-16S rRNA nuclease (134 aa).

The protein belongs to the YqgF nuclease family.

It is found in the cytoplasm. Could be a nuclease involved in processing of the 5'-end of pre-16S rRNA. The chain is Putative pre-16S rRNA nuclease from Helicobacter pylori (strain HPAG1).